Reading from the N-terminus, the 459-residue chain is Nuclear distribution protein PAC1-2 (459 aa).

Positions 56 to 83 form a coiled coil; sequence TSIVRLQKKIMDLESRNAALQTELANLT. WD repeat units follow at residues 108 to 149, 151 to 191, 195 to 244, 246 to 284, 306 to 348, 350 to 389, 394 to 438, and 440 to 459; these read SHRD…RTVK, HTRA…KNIR, GHDH…KTLR, HTAWVRDVCPSFDGRFLLSAGDDMTTRLWNISGSNSDHK, QYLA…LGTL, GHDNWVRALAFHPGGKYLLSVSDDKTLRCWDLSQGGKCVK, AHER…DTPD, and QVRCVIATGGVDKKLQVFAD.

Belongs to the WD repeat LIS1/nudF family. In terms of assembly, self-associates. Interacts with NDL1 and dynein.

The protein localises to the cytoplasm. Its subcellular location is the cytoskeleton. It localises to the spindle pole. Positively regulates the activity of the minus-end directed microtubule motor protein dynein. May enhance dynein-mediated microtubule sliding by targeting dynein to the microtubule plus end. Required for nuclear migration during vegetative growth as well as development. Required for retrograde early endosome (EE) transport from the hyphal tip. Required for localization of dynein to the mitotic spindle poles. Recruits additional proteins to the dynein complex at SPBs. The protein is Nuclear distribution protein PAC1-2 of Uncinocarpus reesii (strain UAMH 1704).